Here is a 273-residue protein sequence, read N- to C-terminus: Putative phosphoenolpyruvate synthase regulatory protein (273 aa).

Residue 153-160 participates in ADP binding; it reads AVSRAGKT.

It belongs to the pyruvate, phosphate/water dikinase regulatory protein family. PSRP subfamily.

It carries out the reaction [pyruvate, water dikinase] + ADP = [pyruvate, water dikinase]-phosphate + AMP + H(+). The enzyme catalyses [pyruvate, water dikinase]-phosphate + phosphate + H(+) = [pyruvate, water dikinase] + diphosphate. In terms of biological role, bifunctional serine/threonine kinase and phosphorylase involved in the regulation of the phosphoenolpyruvate synthase (PEPS) by catalyzing its phosphorylation/dephosphorylation. The chain is Putative phosphoenolpyruvate synthase regulatory protein from Stenotrophomonas maltophilia (strain R551-3).